The sequence spans 426 residues: 3-phosphoshikimate 1-carboxyvinyltransferase (426 aa).

3-phosphoshikimate is bound by residues Lys20, Ser21, and Arg25. Lys20 is a phosphoenolpyruvate binding site. Residues Gly92 and Arg120 each contribute to the phosphoenolpyruvate site. Ser166, Gln168, Asp312, and Lys339 together coordinate 3-phosphoshikimate. Phosphoenolpyruvate is bound at residue Gln168. Catalysis depends on Asp312, which acts as the Proton acceptor. Phosphoenolpyruvate contacts are provided by Arg343 and Arg385.

This sequence belongs to the EPSP synthase family. As to quaternary structure, monomer.

The protein resides in the cytoplasm. The catalysed reaction is 3-phosphoshikimate + phosphoenolpyruvate = 5-O-(1-carboxyvinyl)-3-phosphoshikimate + phosphate. Its pathway is metabolic intermediate biosynthesis; chorismate biosynthesis; chorismate from D-erythrose 4-phosphate and phosphoenolpyruvate: step 6/7. In terms of biological role, catalyzes the transfer of the enolpyruvyl moiety of phosphoenolpyruvate (PEP) to the 5-hydroxyl of shikimate-3-phosphate (S3P) to produce enolpyruvyl shikimate-3-phosphate and inorganic phosphate. In Enterococcus faecalis (strain ATCC 700802 / V583), this protein is 3-phosphoshikimate 1-carboxyvinyltransferase.